Reading from the N-terminus, the 883-residue chain is Valine--tRNA ligase (883 aa).

A 'HIGH' region motif is present at residues 46-56 (PNVTGKLHLGH). Residues 520-524 (KMSKS) carry the 'KMSKS' region motif. Lysine 523 contacts ATP. Residues 809–844 (LADLLNVEEELARLEKELAKWQKELDMVGKKLSNER) are a coiled coil.

This sequence belongs to the class-I aminoacyl-tRNA synthetase family. ValS type 1 subfamily. Monomer.

The protein localises to the cytoplasm. It catalyses the reaction tRNA(Val) + L-valine + ATP = L-valyl-tRNA(Val) + AMP + diphosphate. Catalyzes the attachment of valine to tRNA(Val). As ValRS can inadvertently accommodate and process structurally similar amino acids such as threonine, to avoid such errors, it has a 'posttransfer' editing activity that hydrolyzes mischarged Thr-tRNA(Val) in a tRNA-dependent manner. In Streptococcus thermophilus (strain CNRZ 1066), this protein is Valine--tRNA ligase.